We begin with the raw amino-acid sequence, 214 residues long: Ribonuclease T (214 aa).

The region spanning 20 to 195 (VVVDVETAGF…YDTQQTAELF (176 aa)) is the Exonuclease domain. Residues Asp23, Glu25, His182, and Asp187 each coordinate Mg(2+). His182 acts as the Proton donor/acceptor in catalysis.

Belongs to the RNase T family. In terms of assembly, homodimer. Mg(2+) serves as cofactor.

Trims short 3' overhangs of a variety of RNA species, leaving a one or two nucleotide 3' overhang. Responsible for the end-turnover of tRNA: specifically removes the terminal AMP residue from uncharged tRNA (tRNA-C-C-A). Also appears to be involved in tRNA biosynthesis. The chain is Ribonuclease T from Vibrio campbellii (strain ATCC BAA-1116).